The sequence spans 276 residues: NH(3)-dependent NAD(+) synthetase (276 aa).

ATP is bound at residue 43–50 (GISGGVDS). Asp49 contacts Mg(2+). Position 146 (Arg146) interacts with deamido-NAD(+). Thr166 is an ATP binding site. Mg(2+) is bound at residue Glu171. Deamido-NAD(+) is bound by residues Lys179 and Asp186. Positions 195 and 217 each coordinate ATP. 266-267 (HK) serves as a coordination point for deamido-NAD(+).

Belongs to the NAD synthetase family. Homodimer.

The catalysed reaction is deamido-NAD(+) + NH4(+) + ATP = AMP + diphosphate + NAD(+) + H(+). Its pathway is cofactor biosynthesis; NAD(+) biosynthesis; NAD(+) from deamido-NAD(+) (ammonia route): step 1/1. Catalyzes the ATP-dependent amidation of deamido-NAD to form NAD. Uses ammonia as a nitrogen source. The protein is NH(3)-dependent NAD(+) synthetase of Vibrio campbellii (strain ATCC BAA-1116).